Consider the following 476-residue polypeptide: ATP synthase subunit beta (476 aa).

153 to 160 (GGAGVGKT) is a binding site for ATP.

Belongs to the ATPase alpha/beta chains family. As to quaternary structure, F-type ATPases have 2 components, CF(1) - the catalytic core - and CF(0) - the membrane proton channel. CF(1) has five subunits: alpha(3), beta(3), gamma(1), delta(1), epsilon(1). CF(0) has three main subunits: a(1), b(2) and c(9-12). The alpha and beta chains form an alternating ring which encloses part of the gamma chain. CF(1) is attached to CF(0) by a central stalk formed by the gamma and epsilon chains, while a peripheral stalk is formed by the delta and b chains.

The protein resides in the cell membrane. The enzyme catalyses ATP + H2O + 4 H(+)(in) = ADP + phosphate + 5 H(+)(out). Produces ATP from ADP in the presence of a proton gradient across the membrane. The catalytic sites are hosted primarily by the beta subunits. The sequence is that of ATP synthase subunit beta from Latilactobacillus sakei subsp. sakei (strain 23K) (Lactobacillus sakei subsp. sakei).